A 681-amino-acid chain; its full sequence is Terpene synthase 6, chloroplastic (681 aa).

Aspartate 433, aspartate 437, asparagine 577, and glutamate 585 together coordinate Mg(2+). The DDXXD motif motif lies at 433-437; it reads DDLFD.

This sequence belongs to the terpene synthase family. Mg(2+) serves as cofactor. As to expression, expressed in leaves.

Its subcellular location is the plastid. It is found in the chloroplast. Its pathway is secondary metabolite biosynthesis; terpenoid biosynthesis. In terms of biological role, may be involved in the biosynthesis of ent-kaurene diterpenoids natural products such as oridonin, miltiradiene, eriocalyxin B and nezukol, known to exhibit antitumor, anti-inflammatory and antibacterial activities. This Isodon rubescens (Rabdosia rubescens) protein is Terpene synthase 6, chloroplastic.